The sequence spans 424 residues: L-glutamine:2-deoxy-scyllo-inosose aminotransferase (424 aa).

Lys202 bears the N6-(pyridoxal phosphate)lysine mark.

The protein belongs to the DegT/DnrJ/EryC1 family. L-glutamine:2-deoxy-scyllo-inosose/scyllo-inosose aminotransferase subfamily. Pyridoxal 5'-phosphate serves as cofactor.

It carries out the reaction 2-deoxy-L-scyllo-inosose + L-glutamine = 2-deoxy-scyllo-inosamine + 2-oxoglutaramate. It catalyses the reaction 3-amino-2,3-dideoxy-scyllo-inosose + L-glutamine = 2-deoxystreptamine + 2-oxoglutaramate. The protein operates within metabolic intermediate biosynthesis; 2-deoxystreptamine biosynthesis; 2-deoxystreptamine from D-glucose 6-phosphate: step 2/4. Its pathway is metabolic intermediate biosynthesis; 2-deoxystreptamine biosynthesis; 2-deoxystreptamine from D-glucose 6-phosphate: step 4/4. It functions in the pathway antibiotic biosynthesis; neomycin biosynthesis. In terms of biological role, catalyzes the PLP-dependent transamination of 2-deoxy-scyllo-inosose (2-DOI) to form 2-deoxy-scyllo-inosamine (2-DOIA) using L-glutamine as the amino donor. Also catalyzes the transamination of 3-amino-2,3-dideoxy-scyllo-inosose (keto-2-DOIA) into 2-deoxystreptamine (2-DOS). This chain is L-glutamine:2-deoxy-scyllo-inosose aminotransferase (neoB), found in Streptomyces fradiae (Streptomyces roseoflavus).